The primary structure comprises 285 residues: MDDSTEREQSRLTSCLKKREEMKLKECVSILPRKESPSVRSSKDGKLLAATLLLALLSCCLTVVSFYQVAALQGDLASLRAELQGHHAEKLPAGAGAPKAGLEEAPAVTAGLKIFEPPAPGEGNSSQNSRNKRAVQGPEETVTQDCLQLIADSETPTIQKGSYTFVPWLLSFKRGSALEEKENKILVKETGYFFIYGQVLYTDKTYAMGHLIQRKKVHVFGDELSLVTLFRCIQNMPETLPNNSCYSAGIAKLEEGDELQLAIPRENAQISLDGDVTFFGALKLL.

The Cytoplasmic segment spans residues 1–46 (MDDSTEREQSRLTSCLKKREEMKLKECVSILPRKESPSVRSSKDGK). A helical; Signal-anchor for type II membrane protein transmembrane segment spans residues 47–67 (LLAATLLLALLSCCLTVVSFY). At 68–285 (QVAALQGDLA…VTFFGALKLL (218 aa)) the chain is on the extracellular side. Positions 114–138 (IFEPPAPGEGNSSQNSRNKRAVQGP) are disordered. A glycan (N-linked (GlcNAc...) asparagine) is linked at Asn124. In terms of domain architecture, THD spans 145-284 (DCLQLIADSE…DVTFFGALKL (140 aa)). A disulfide bond links Cys232 and Cys245. N-linked (GlcNAc...) (high mannose) asparagine glycosylation occurs at Asn242.

Belongs to the tumor necrosis factor family. Homotrimer. Isoform 2 heteromultimerizes with isoform 1, probably limiting the amount of functional isoform 1 on the cell surface. Isoform 3 is unlikely form trimers or bind to BAFF receptors. Post-translationally, the soluble form derives from the membrane form by proteolytic processing. Isoform 2 is not efficiently shed from the membrane unlike isoform 1. In terms of processing, N-glycosylated. As to expression, abundantly expressed in peripheral blood Leukocytes and is specifically expressed in monocytes and macrophages. Also found in the spleen, lymph node, bone marrow, T-cells and dendritic cells. A lower expression seen in placenta, heart, lung, fetal liver, thymus, and pancreas. Isoform 2 is expressed in many myeloid cell lines.

It localises to the cell membrane. The protein resides in the secreted. Functionally, cytokine that binds to TNFRSF13B/TACI and TNFRSF17/BCMA. TNFSF13/APRIL binds to the same 2 receptors. Together, they form a 2 ligands -2 receptors pathway involved in the stimulation of B- and T-cell function and the regulation of humoral immunity. A third B-cell specific BAFF-receptor (BAFFR/BR3) promotes the survival of mature B-cells and the B-cell response. Its function is as follows. Isoform 2 seems to inhibit isoform 1 secretion and bioactivity. In terms of biological role, acts as a transcription factor for its own parent gene, in association with NF-kappa-B p50 subunit, at least in autoimmune and proliferative B-cell diseases. The presence of Delta4BAFF is essential for soluble BAFF release by IFNG/IFN-gamma-stimulated monocytes and for B-cell survival. It can directly or indirectly regulate the differential expression of a large number of genes involved in the innate immune response and the regulation of apoptosis. The protein is Tumor necrosis factor ligand superfamily member 13B (TNFSF13B) of Homo sapiens (Human).